A 145-amino-acid polypeptide reads, in one-letter code: D-aminoacyl-tRNA deacylase (145 aa).

A Gly-cisPro motif, important for rejection of L-amino acids motif is present at residues 137 to 138 (GP).

The protein belongs to the DTD family. Homodimer.

The protein localises to the cytoplasm. The enzyme catalyses glycyl-tRNA(Ala) + H2O = tRNA(Ala) + glycine + H(+). It carries out the reaction a D-aminoacyl-tRNA + H2O = a tRNA + a D-alpha-amino acid + H(+). Functionally, an aminoacyl-tRNA editing enzyme that deacylates mischarged D-aminoacyl-tRNAs. Also deacylates mischarged glycyl-tRNA(Ala), protecting cells against glycine mischarging by AlaRS. Acts via tRNA-based rather than protein-based catalysis; rejects L-amino acids rather than detecting D-amino acids in the active site. By recycling D-aminoacyl-tRNA to D-amino acids and free tRNA molecules, this enzyme counteracts the toxicity associated with the formation of D-aminoacyl-tRNA entities in vivo and helps enforce protein L-homochirality. This is D-aminoacyl-tRNA deacylase from Lactobacillus delbrueckii subsp. bulgaricus (strain ATCC 11842 / DSM 20081 / BCRC 10696 / JCM 1002 / NBRC 13953 / NCIMB 11778 / NCTC 12712 / WDCM 00102 / Lb 14).